We begin with the raw amino-acid sequence, 463 residues long: Peptidase inhibitor 16 (463 aa).

The N-terminal stretch at 1–27 (MHGSCSFLMLLLPLLLLLVATTGPVGA) is a signal peptide. The SCP domain maps to 37–165 (VELHNLYRAQ…TNIELLVCNY (129 aa)). N114 is a glycosylation site (N-linked (GlcNAc...) asparagine). Disordered regions lie at residues 262–281 (TQAPTSLATKDPPSMATEAP), 303–341 (EPVTFPKSTHVPIPKSADKVTDKTKVPSRSPENSLDPKM), and 383–408 (LQATLDHTGHTSSKSLPNFPNTSATA). The segment covering 318–327 (SADKVTDKTK) has biased composition (basic and acidic residues). Residues 386–395 (TLDHTGHTSS) are O-glycosylated at one site. A compositionally biased stretch (polar residues) spans 392-408 (HTSSKSLPNFPNTSATA). N-linked (GlcNAc...) asparagine glycans are attached at residues N403 and N409.

Belongs to the CRISP family. As to quaternary structure, interacts with PSP94/MSMB. In terms of processing, N- and O-glycosylated. O-glycosylated with core 1 or possibly core 8 glycans. Expressed in prostate, testis, ovary and intestine. Concentrates in prostate cancer patient's sera.

Its subcellular location is the secreted. In terms of biological role, may inhibit cardiomyocyte growth. This chain is Peptidase inhibitor 16 (PI16), found in Homo sapiens (Human).